The following is a 325-amino-acid chain: NADH-cytochrome b5 reductase 2 (325 aa).

A helical transmembrane segment spans residues Val32–Tyr48. Residues Gln74–Glu179 form the FAD-binding FR-type domain. Lys182 to Leu217 serves as a coordination point for FAD.

The protein belongs to the flavoprotein pyridine nucleotide cytochrome reductase family. The cofactor is FAD.

The protein resides in the mitochondrion outer membrane. It catalyses the reaction 2 Fe(III)-[cytochrome b5] + NADH = 2 Fe(II)-[cytochrome b5] + NAD(+) + H(+). In terms of biological role, may mediate the reduction of outer membrane cytochrome b5. The polypeptide is NADH-cytochrome b5 reductase 2 (MCR1) (Coccidioides immitis (strain RS) (Valley fever fungus)).